The chain runs to 466 residues: Asparagine--tRNA ligase (466 aa).

It belongs to the class-II aminoacyl-tRNA synthetase family. As to quaternary structure, homodimer.

Its subcellular location is the cytoplasm. It carries out the reaction tRNA(Asn) + L-asparagine + ATP = L-asparaginyl-tRNA(Asn) + AMP + diphosphate + H(+). The sequence is that of Asparagine--tRNA ligase from Psychromonas ingrahamii (strain DSM 17664 / CCUG 51855 / 37).